The sequence spans 488 residues: MTKYTEQEQIRRDKLEFYKKFDVVPFKKAYGLGKLSTSDELNKKYGQFAREELEAKKVKKNISGRLITARGPFLVLKDRKGTIQVYFNKKENPELTKIVETFDLGDILWVRGLLMKTHTGEMTVRAQDIQLLTKALKPLPDKFHGLTDTEERYRHRYLDLITNPESRNTFIMRTKIVQWIRDYFNKLDYLEAETPFLHDYLSGAAAKPFTTHHNSLNQDFVLRIATEIPLKKLVVGGFERVYEMGRIFRNEGYDTTHNPEFTTIEFYEAYSNVEGMMNRTETLIKELCKKIGKSKFVTNGVEVDLSKPFKRVNMIDEVSKKTGKNFRKITLEEAIEVAKAYKIKIEKFFTIGHIINALYEELVEPTLIQPTFLYGHPIEISPLSAKSDDPRFTERAELFINTKEYANMYTELSDPIDQLERFESQLEEKNKGNDEASDIDYDFVDALEYGMPPTGGCGIGIDRLVMLLTETDSIRDVLLFPTLKRIKK.

Mg(2+) contacts are provided by E397 and E404.

This sequence belongs to the class-II aminoacyl-tRNA synthetase family. Homodimer. The cofactor is Mg(2+).

Its subcellular location is the cytoplasm. The catalysed reaction is tRNA(Lys) + L-lysine + ATP = L-lysyl-tRNA(Lys) + AMP + diphosphate. This Mycoplasmopsis fermentans (strain ATCC 19989 / NBRC 14854 / NCTC 10117 / PG18) (Mycoplasma fermentans) protein is Lysine--tRNA ligase (lysS).